The following is a 301-amino-acid chain: tRNA pseudouridine synthase B (301 aa).

The active-site Nucleophile is the Asp-38.

Belongs to the pseudouridine synthase TruB family. Type 1 subfamily.

The catalysed reaction is uridine(55) in tRNA = pseudouridine(55) in tRNA. Functionally, responsible for synthesis of pseudouridine from uracil-55 in the psi GC loop of transfer RNAs. This Clostridioides difficile (strain 630) (Peptoclostridium difficile) protein is tRNA pseudouridine synthase B.